We begin with the raw amino-acid sequence, 198 residues long: HTH-type transcriptional regulator BetI (198 aa).

The 61-residue stretch at 8 to 68 (KIRRPQLVSA…ETMRDILRQL (61 aa)) folds into the HTH tetR-type domain. The H-T-H motif DNA-binding region spans 31-50 (SVSLISQEAGVSSGIINHYF).

It functions in the pathway amine and polyamine biosynthesis; betaine biosynthesis via choline pathway [regulation]. In terms of biological role, repressor involved in the biosynthesis of the osmoprotectant glycine betaine. It represses transcription of the choline transporter BetT and the genes of BetAB involved in the synthesis of glycine betaine. The polypeptide is HTH-type transcriptional regulator BetI (Vibrio vulnificus (strain YJ016)).